The chain runs to 57 residues: High-potential iron-sulfur protein (57 aa).

Residues Cys21, Cys24, Cys33, and Cys46 each coordinate [4Fe-4S] cluster.

It belongs to the high-potential iron-sulfur protein (HiPIP) family. As to quaternary structure, homodimer.

Its function is as follows. Specific class of high-redox-potential 4Fe-4S ferredoxins. Functions in anaerobic electron transport in most purple and in some other photosynthetic bacteria and in at least one genus (Paracoccus) of halophilic, denitrifying bacteria. This is High-potential iron-sulfur protein (hip) from Rhodopila globiformis (Rhodopseudomonas globiformis).